Consider the following 330-residue polypeptide: MNQNLIRLGYACLNSDLRNYDIFTSRKPILKTVKSQGFDYVKETIIRNLRDLFTIIIYNESHGIRFFRISSSIFPHLGNPLLPDSDYDLSFAKNLIKEIGSYAKINGHRLTMHPGQFVQLGSNNEEVVRRSFVELQNHATLLEMLGYSSLDSSVLIVHGGGTFGDKETTLERWKSNFRKLPENIRQLICLENDENSYGILDLLPVCEELNVPFCLDIFHNRVSKNRIPLTKKLMKRIINTWKRRNMTPKMHFSNQEPGLRRGAHSKTINELPEYLFRIPDMFQTSLDIILEVKDKEKSVLKMYFKYFDIETNIDGRNNFILKKDYSLKKN.

It belongs to the uve1/UvsE family.

It is found in the virion. In terms of biological role, endonuclease for the repair of UV-irradiated DNA. In Acanthamoeba polyphaga mimivirus (APMV), this protein is Putative UV-damage endonuclease.